The sequence spans 115 residues: Non-specific lipid-transfer protein (115 aa).

The first 24 residues, 1–24 (MASSAVTKLALVVALCMAVSVAHA), serve as a signal peptide directing secretion. Cystine bridges form between C27–C74, C37–C51, C52–C97, and C72–C111.

It belongs to the plant LTP family.

Functionally, plant non-specific lipid-transfer proteins transfer phospholipids as well as galactolipids across membranes. May play a role in wax or cutin deposition in the cell walls of expanding epidermal cells and certain secretory tissues. This Malus domestica (Apple) protein is Non-specific lipid-transfer protein (MALD3).